The sequence spans 523 residues: Type 2 DNA topoisomerase 6 subunit B (523 aa).

Residues asparagine 48, aspartate 80, 101–102 (SK), 110–117 (GQQGLGCS), and lysine 436 contribute to the ATP site.

This sequence belongs to the TOP6B family. In terms of assembly, homodimer. Heterotetramer of two Top6A and two Top6B chains.

The catalysed reaction is ATP-dependent breakage, passage and rejoining of double-stranded DNA.. Its function is as follows. Relaxes both positive and negative superturns and exhibits a strong decatenase activity. The sequence is that of Type 2 DNA topoisomerase 6 subunit B from Methanothermobacter thermautotrophicus (strain ATCC 29096 / DSM 1053 / JCM 10044 / NBRC 100330 / Delta H) (Methanobacterium thermoautotrophicum).